The primary structure comprises 140 residues: MAKKVTGFVKLQIPAGKANPAPPVGTALGPQGINIMGFCKEFNARTQGGDMIIPVEVTIYADKSFTFILKTPPAAELIKKELGVERGSGQPNKVKVGTITRAQLEKIATTKMPDLNCESMESAVAMIAGAARSMGITVKD.

The protein belongs to the universal ribosomal protein uL11 family. Part of the ribosomal stalk of the 50S ribosomal subunit. Interacts with L10 and the large rRNA to form the base of the stalk. L10 forms an elongated spine to which L12 dimers bind in a sequential fashion forming a multimeric L10(L12)X complex. In terms of processing, one or more lysine residues are methylated.

Functionally, forms part of the ribosomal stalk which helps the ribosome interact with GTP-bound translation factors. The protein is Large ribosomal subunit protein uL11 of Gemmatimonas aurantiaca (strain DSM 14586 / JCM 11422 / NBRC 100505 / T-27).